The sequence spans 585 residues: uncharacterized protein (585 aa).

Transmembrane regions (helical) follow at residues 18–38 (FMWSLLAMLLMTAITVVYPII), 55–75 (AAWVSLGFIAVMVLKGMATFF), 128–148 (FFLSYGLAELIRFGLLVAISL), 150–170 (VMFYYSVPLTLVTIAVLPFLA), 238–258 (IWSAYFPLMEFIGNTCIVALL), and 276–296 (VAFFSLVNYMMWPIMNLGFVI). Residues 18–301 (FMWSLLAMLL…LGFVINMFSQ (284 aa)) enclose the ABC transmembrane type-1 domain. The ABC transporter domain occupies 335-570 (VHFKNVSLAY…GGYYKKIYDL (236 aa)). 369–376 (GPTGSGKS) provides a ligand contact to ATP.

The protein belongs to the ABC transporter superfamily.

Its subcellular location is the cell membrane. This is an uncharacterized protein from Bacillus subtilis (strain 168).